Consider the following 478-residue polypeptide: Cytochrome P450 monooxygenase ATR3 (478 aa).

The chain crosses the membrane as a helical span at residues 20-42 (AVAFVTASALYYVLPAAISHIQL). Residues N159 and N268 are each glycosylated (N-linked (GlcNAc...) asparagine).

This sequence belongs to the cytochrome P450 family. It depends on heme as a cofactor.

The protein resides in the membrane. It participates in mycotoxin biosynthesis. Functionally, cytochrome P450 monooxygenase; part of the core atranone cluster (CAC) which products are predicted to catalyze most or all steps of mycotoxin atranone synthesis, starting from geranylgeranyl pyrophosphate (GGPP). The initial cyclization of GGPP to dolabellane is probably performed by the terpene cyclase ATR13. The Baeyer-Villiger oxidation near the end of the atranone synthesis, which converts atranones D and E to atranones F and G is predicted to be catalyzed by the monooxygenase ATR8. Of the CAC's other predicted gene products, the reducing PKS ATR6 might synthesize a polyketide chain. This polyketide is probably transferred onto the atranone backbone by the polyketide transferase ATR5. Other predicted CAC products include 4 oxygenases (ATR2, ATR3, ATR4, and ATR14), 3 short-chain reductases (ATR7, ATR9, and ATR10), and a methyltransferase (ATR12). These may all be involved in the various steps of atranone biosynthesis, although their specific roles must await experimental determination. The chain is Cytochrome P450 monooxygenase ATR3 from Stachybotrys chlorohalonatus (strain IBT 40285).